Consider the following 465-residue polypeptide: Alpha-2A adrenergic receptor (465 aa).

Over 1–48 (MFRQEQPLAEGSFAPMGSLQPDAGNSSWNGTEAPGGGTRATPYSLQVT) the chain is Extracellular. Residues Asn-25 and Asn-29 are each glycosylated (N-linked (GlcNAc...) asparagine). Residues 49 to 74 (LTLVCLAGLLMLFTVFGNVLVIIAVF) traverse the membrane as a helical segment. The Cytoplasmic segment spans residues 75–85 (TSRALKAPQNL). A helical transmembrane segment spans residues 86-111 (FLVSLASADILVATLVIPFSLANEVM). Topologically, residues 112–121 (GYWYFGKVWC) are extracellular. Cys-121 and Cys-203 are oxidised to a cystine. The chain crosses the membrane as a helical span at residues 122–144 (EIYLALDVLFCTSSIVHLCAISL). The Cytoplasmic segment spans residues 145–164 (DRYWSITQAIEYNLKRTPRR). Residues 165 to 188 (IKAIIVTVWVISAVISFPPLISIE) traverse the membrane as a helical segment. Topologically, residues 189-207 (KKGAGGGQQPAEPSCKIND) are extracellular. A helical membrane pass occupies residues 208 to 232 (QKWYVISSSIGSFFAPCLIMILVYV). The Cytoplasmic portion of the chain corresponds to 233–389 (RIYQIAKRRT…RQNREKRFTF (157 aa)). The segment at 242–378 (TRVPPSRRGP…GGGAKASRWR (137 aa)) is disordered. A compositionally biased stretch (basic and acidic residues) spans 313 to 330 (SSEHAERPPGPRRPDRGP). The residue at position 346 (Ser-346) is a Phosphoserine. Residues 353–363 (GAAGPGASGSG) are compositionally biased toward gly residues. An Omega-N-methylarginine modification is found at Arg-368. A helical transmembrane segment spans residues 390–414 (VLAVVIGVFVVCWFPFFFTYTLIAV). The Extracellular segment spans residues 415 to 424 (GCPVPSQLFN). The chain crosses the membrane as a helical span at residues 425–445 (FFFWFGYCNSSLNPVIYTIFN). The Cytoplasmic portion of the chain corresponds to 446-465 (HDFRRAFKKILCRGDRKRIV). Cys-457 carries the S-palmitoyl cysteine lipid modification.

This sequence belongs to the G-protein coupled receptor 1 family. Adrenergic receptor subfamily. ADRA2A sub-subfamily.

The protein resides in the cell membrane. Functionally, alpha-2 adrenergic receptors mediate the catecholamine-induced inhibition of adenylate cyclase through the action of G proteins. This Mus musculus (Mouse) protein is Alpha-2A adrenergic receptor.